The following is a 387-amino-acid chain: 1-deoxy-D-xylulose 5-phosphate reductoisomerase (387 aa).

7 residues coordinate NADPH: Thr-10, Gly-11, Ser-12, Ile-13, Gly-36, Arg-37, and Asn-124. Lys-125 is a 1-deoxy-D-xylulose 5-phosphate binding site. Residue Glu-126 coordinates NADPH. Asp-150 is a binding site for Mn(2+). 1-deoxy-D-xylulose 5-phosphate contacts are provided by Ser-151, Glu-152, Ser-176, and His-199. Glu-152 provides a ligand contact to Mn(2+). Gly-205 contributes to the NADPH binding site. Ser-212, Asn-217, Lys-218, and Glu-221 together coordinate 1-deoxy-D-xylulose 5-phosphate. Glu-221 serves as a coordination point for Mn(2+).

This sequence belongs to the DXR family. Mg(2+) is required as a cofactor. It depends on Mn(2+) as a cofactor.

The catalysed reaction is 2-C-methyl-D-erythritol 4-phosphate + NADP(+) = 1-deoxy-D-xylulose 5-phosphate + NADPH + H(+). The protein operates within isoprenoid biosynthesis; isopentenyl diphosphate biosynthesis via DXP pathway; isopentenyl diphosphate from 1-deoxy-D-xylulose 5-phosphate: step 1/6. In terms of biological role, catalyzes the NADPH-dependent rearrangement and reduction of 1-deoxy-D-xylulose-5-phosphate (DXP) to 2-C-methyl-D-erythritol 4-phosphate (MEP). This Cyanothece sp. (strain PCC 7425 / ATCC 29141) protein is 1-deoxy-D-xylulose 5-phosphate reductoisomerase.